The following is a 582-amino-acid chain: MSIDFRSLNTVWSSILVETLHHLGLTTAIISPGYRSTPLTFAFATHPKIETIPILDERSAAFFALGIAKKNYQPIVIVCTSGTAAANFYPAIIEAKESRIPLLVLTADRPPELRNCHAGQTIDQVKLYGNYPNWQIELTLPSVELKRLEYLRQTVIHGWEKTMFPTPGPVHFNIPFRDPLAPINQPEAIALESKFSQNFFASLRPIIRTELIPNSDLIELLKNQFKSHSGIIIAGLAQPEKPEVYCQAIAKISQTLNFPVLAEGLSPLRNYSQLNPYLISTYDLILRNQKLANKLIPKIVLQIGELPTSKQLRTWLEAANSHRLIIDQSDHNFDPLHGKTTHLRISVEQLAKILITQYFNNNHDINYLNLWCQAEEKVRENIDTKMAKINHILEPKISWLISQTLPKNTSIFVANSMPVRDVEFFWVPNNSQIQPFFNRGVNGIDGTLSTALGIAHRYQKTVMLTGDLALLHDTNGFLLRNKLVGHLTIILINNQGGGIFEMLPIANFEPPFTEFFATPQEIDFADLCKTYGLEHQKISSWNQLQQLLNPLPSSGIRILELQTDRQLDARWRLDNLDTFIDL.

This sequence belongs to the TPP enzyme family. MenD subfamily. Homodimer. The cofactor is Mg(2+). Requires Mn(2+) as cofactor. Thiamine diphosphate serves as cofactor.

The enzyme catalyses isochorismate + 2-oxoglutarate + H(+) = 5-enolpyruvoyl-6-hydroxy-2-succinyl-cyclohex-3-ene-1-carboxylate + CO2. It participates in quinol/quinone metabolism; 1,4-dihydroxy-2-naphthoate biosynthesis; 1,4-dihydroxy-2-naphthoate from chorismate: step 2/7. It functions in the pathway cofactor biosynthesis; phylloquinone biosynthesis. Catalyzes the thiamine diphosphate-dependent decarboxylation of 2-oxoglutarate and the subsequent addition of the resulting succinic semialdehyde-thiamine pyrophosphate anion to isochorismate to yield 2-succinyl-5-enolpyruvyl-6-hydroxy-3-cyclohexene-1-carboxylate (SEPHCHC). The polypeptide is 2-succinyl-5-enolpyruvyl-6-hydroxy-3-cyclohexene-1-carboxylate synthase (Trichodesmium erythraeum (strain IMS101)).